A 245-amino-acid chain; its full sequence is 1-(5-phosphoribosyl)-5-[(5-phosphoribosylamino)methylideneamino] imidazole-4-carboxamide isomerase (245 aa).

Residue D7 is the Proton acceptor of the active site. The active-site Proton donor is the D129.

This sequence belongs to the HisA/HisF family.

It localises to the cytoplasm. It carries out the reaction 1-(5-phospho-beta-D-ribosyl)-5-[(5-phospho-beta-D-ribosylamino)methylideneamino]imidazole-4-carboxamide = 5-[(5-phospho-1-deoxy-D-ribulos-1-ylimino)methylamino]-1-(5-phospho-beta-D-ribosyl)imidazole-4-carboxamide. The protein operates within amino-acid biosynthesis; L-histidine biosynthesis; L-histidine from 5-phospho-alpha-D-ribose 1-diphosphate: step 4/9. The sequence is that of 1-(5-phosphoribosyl)-5-[(5-phosphoribosylamino)methylideneamino] imidazole-4-carboxamide isomerase from Salmonella arizonae (strain ATCC BAA-731 / CDC346-86 / RSK2980).